The primary structure comprises 69 residues: Guanine nucleotide-binding protein G(I)/G(S)/G(O) subunit gamma-T2 (69 aa).

A Cysteine methyl ester modification is found at Cys-66. Cys-66 is lipidated: S-farnesyl cysteine. The propeptide at 67–69 (LIS) is removed in mature form.

It belongs to the G protein gamma family. G proteins are composed of 3 units, alpha, beta and gamma. As to expression, retinal cones.

Its subcellular location is the cell membrane. Its function is as follows. Guanine nucleotide-binding proteins (G proteins) are involved as a modulator or transducer in various transmembrane signaling systems. The beta and gamma chains are required for the GTPase activity, for replacement of GDP by GTP, and for G protein-effector interaction. The chain is Guanine nucleotide-binding protein G(I)/G(S)/G(O) subunit gamma-T2 (GNGT2) from Homo sapiens (Human).